A 633-amino-acid chain; its full sequence is Mini-chromosome maintenance complex-binding protein (633 aa).

A disordered region spans residues 154-198 (PSTSYTPSRHKRSYEEDEDMEQHPSKQKEQHMGSGGDSHGCGEPK). The span at 174–184 (EQHPSKQKEQH) shows a compositional bias: basic and acidic residues.

It belongs to the MCMBP family. In terms of assembly, interacts with the MCM complex: associates with the MCM3-7 complex which lacks MCM2, while it does not interact with the MCM complex when MCM2 is present (MCM2-7 complex).

It is found in the nucleus. In terms of biological role, associated component of the MCM complex that acts as a regulator of DNA replication. Binds to the MCM complex during late S phase and promotes the disassembly of the MCM complex from chromatin, thereby acting as a key regulator of pre-replication complex (pre-RC) unloading from replicated DNA. Can dissociate the MCM complex without addition of ATP; probably acts by destabilizing interactions of each individual subunits of the MCM complex. Required for sister chromatid cohesion. This is Mini-chromosome maintenance complex-binding protein (MCMBP) from Gallus gallus (Chicken).